An 86-amino-acid chain; its full sequence is Exodeoxyribonuclease 7 small subunit (86 aa).

A disordered region spans residues 1–27 (MQDELFETEKIPPKNTKNAKNAPKKSF).

The protein belongs to the XseB family. As to quaternary structure, heterooligomer composed of large and small subunits.

It localises to the cytoplasm. It catalyses the reaction Exonucleolytic cleavage in either 5'- to 3'- or 3'- to 5'-direction to yield nucleoside 5'-phosphates.. Functionally, bidirectionally degrades single-stranded DNA into large acid-insoluble oligonucleotides, which are then degraded further into small acid-soluble oligonucleotides. This chain is Exodeoxyribonuclease 7 small subunit, found in Helicobacter pylori (strain G27).